The following is a 180-amino-acid chain: NAD(P)H-quinone oxidoreductase subunit I, chloroplastic (180 aa).

2 consecutive 4Fe-4S ferredoxin-type domains span residues 55–84 and 95–124; these read GRIH…VHWR and LNYS…MTEE. [4Fe-4S] cluster contacts are provided by cysteine 64, cysteine 67, cysteine 70, cysteine 74, cysteine 104, cysteine 107, cysteine 110, and cysteine 114.

The protein belongs to the complex I 23 kDa subunit family. NDH is composed of at least 16 different subunits, 5 of which are encoded in the nucleus. [4Fe-4S] cluster is required as a cofactor.

The protein localises to the plastid. It is found in the chloroplast thylakoid membrane. The catalysed reaction is a plastoquinone + NADH + (n+1) H(+)(in) = a plastoquinol + NAD(+) + n H(+)(out). The enzyme catalyses a plastoquinone + NADPH + (n+1) H(+)(in) = a plastoquinol + NADP(+) + n H(+)(out). Its function is as follows. NDH shuttles electrons from NAD(P)H:plastoquinone, via FMN and iron-sulfur (Fe-S) centers, to quinones in the photosynthetic chain and possibly in a chloroplast respiratory chain. The immediate electron acceptor for the enzyme in this species is believed to be plastoquinone. Couples the redox reaction to proton translocation, and thus conserves the redox energy in a proton gradient. This chain is NAD(P)H-quinone oxidoreductase subunit I, chloroplastic, found in Calycanthus floridus var. glaucus (Eastern sweetshrub).